The chain runs to 250 residues: Type-1Ab cytolytic delta-endotoxin (250 aa).

This sequence belongs to the cyt1/cyt2 endotoxin family. Post-translationally, active after proteolytic processing.

Its function is as follows. Kills the larvae of dipteran insects by making pores in the epithelial cell membrane of the insect midgut. In Bacillus thuringiensis subsp. medellin, this protein is Type-1Ab cytolytic delta-endotoxin (cyt1Ab1).